A 935-amino-acid chain; its full sequence is MHDIDVAIQINMLFLPPTNELIRVDSNSKQLNQPQQQQQQQQQQINNENENSINNQENKENNNKDNNNNNNKEIKQSSEWGSKFSSLFSNMTKKKKSNFDLEMDAIKDAFLLNKPINNEEGLLIYSLDKSKKYIHSLSELDIGYVYLTEKETPIIRQNEDEVILANKVIIQANTMKRFSIKGILQSDVTTNALEIFTKRKMSQGVLFLEEDGSLCRIFYKIQDLITDTIYCNQDDTVMLQKLPNNEGIRFRFRGSFNREQVQQAMLAFSQPSDPQTWKRTIILREQQHHSSQSFTGDSVASRFLNKLSSKTKEDEESNDLKTKRENTVLKLKNRMKIDWDWKYTSTSVPIDQEPPTFIDNMVNRVREKISGSNNKLSDLLSSAKKQPQQQPQKDVTSSSSSSSNSSSPYLDSVDKLVITTNDSSSSNPLPDFDKLSLSSDDKVNNNNVQIENTTPSVPPPPPVGAPPPPPPPPPPPPPPPPSTLKLNRNRISTPKKPNNSGGGGGGGQLTPLQKKMRQLHWNAIPREKLKETFWDNLSPVKGNDNDQTLVESWFSLSPMAKEKMSKENLNNSNNNNNNNSNNNGEEQSLSDSGNTIVISKIIILDLRRSNNICILLSQFKLSYGAIKEAILCFEDGKLSVEQLIALDAMLPISEEEYQSLSSANYQSIEQLGNAERFLIEMMSIQHLQQRVQTYLFKLEVCSLLDSIEINNNQLSKAIEQLRNSRKFIKVLKVIFHIGSILNRGTYLNSTKGFKLDSLSKLSETKSKDQKHTVVDFIEIYIRENQPELLNFYSELDLLDKIPQSSLENILEESNEIENKFKQVDQEIQYHQQLLTNDNNNTLSSSSSSSYDQSKDTYLKVMSPFYDTFNTRFITIKQSTQQTLKQFQECCIYFGEDPQNITSKDFFSNIVKFSIAFKSSSNNAKKSLNLSTLNSK.

The stretch at 35 to 76 (QQQQQQQQQQINNENENSINNQENKENNNKDNNNNNNKEIKQ) forms a coiled coil. Disordered stretches follow at residues 52–78 (SINN…KQSS), 380–511 (LSSA…QLTP), and 561–590 (KEKM…QSLS). Residues 384–407 (KKQPQQQPQKDVTSSSSSSSNSSS) are compositionally biased toward low complexity. Residues 418 to 428 (ITTNDSSSSNP) show a composition bias toward polar residues. The segment covering 431 to 443 (DFDKLSLSSDDKV) has biased composition (basic and acidic residues). A compositionally biased stretch (polar residues) spans 444–454 (NNNNVQIENTT). One can recognise an FH1 domain in the interval 444–505 (NNNNVQIENT…KPNNSGGGGG (62 aa)). A compositionally biased stretch (pro residues) spans 456 to 482 (SVPPPPPVGAPPPPPPPPPPPPPPPPS). Over residues 484-499 (LKLNRNRISTPKKPNN) the composition is skewed to polar residues. The FH2 domain maps to 506-935 (GGQLTPLQKK…SLNLSTLNSK (430 aa)). Low complexity predominate over residues 568–583 (NLNNSNNNNNNNSNNN). Coiled coils occupy residues 702–730 (SLLD…FIKV) and 803–834 (QSSL…QQLL).

Belongs to the formin homology family. Diaphanous subfamily.

Its function is as follows. Formins play an important role in the nucleation of actin and the formation of linear actin filaments. This Dictyostelium discoideum (Social amoeba) protein is Formin-I (forI).